Reading from the N-terminus, the 876-residue chain is Neurotrypsin (876 aa).

The first 20 residues, 1 to 20 (MTLARFVLALMLGALPEVVG), serve as a signal peptide directing secretion. Residue Asn-26 is glycosylated (N-linked (GlcNAc...) asparagine). The interval 29 to 89 (LHHSHRHSPP…ALQAGHTPRP (61 aa)) is disordered. Low complexity predominate over residues 43 to 54 (YPSYYLPTQQRP). The segment covering 57–72 (TRPPPPLPRFPRPPRA) has biased composition (pro residues). Residues 94 to 166 (CPAGEPWVSV…GKVDWGYCDC (73 aa)) enclose the Kringle domain. 20 cysteine pairs are disulfide-bonded: Cys-94-Cys-166, Cys-110-Cys-150, Cys-139-Cys-164, Cys-196-Cys-260, Cys-209-Cys-270, Cys-240-Cys-250, Cys-306-Cys-370, Cys-319-Cys-380, Cys-350-Cys-360, Cys-413-Cys-476, Cys-426-Cys-486, Cys-456-Cys-466, Cys-526-Cys-590, Cys-539-Cys-600, Cys-570-Cys-580, Cys-620-Cys-751, Cys-662-Cys-678, Cys-766-Cys-832, Cys-795-Cys-809, and Cys-822-Cys-851. SRCR domains are found at residues 171 to 272 (VRLR…TCSF), 281 to 382 (IRLA…SCTP), 388 to 488 (IRLA…ACYP), and 501 to 602 (VRLM…ICDY). The tract at residues 620 to 631 (CGLRLLHRRQKR) is zymogen activation region. The Peptidase S1 domain maps to 632 to 875 (IIGGKNSLRG…FVPWIKSVTK (244 aa)). The active-site Charge relay system is the His-677. Asn-684 carries an N-linked (GlcNAc...) asparagine glycan. Asp-727 functions as the Charge relay system in the catalytic mechanism. Ser-826 (charge relay system) is an active-site residue.

It belongs to the peptidase S1 family.

The protein resides in the secreted. In terms of biological role, plays a role in neuronal plasticity and the proteolytic action may subserve structural reorganizations associated with learning and memory operations. The sequence is that of Neurotrypsin (PRSS12) from Gorilla gorilla gorilla (Western lowland gorilla).